A 76-amino-acid polypeptide reads, in one-letter code: RNA-binding protein KhpA (76 aa).

Residues 30-76 (GEVLEVRVNPEDLGRVIGRSGRTAKALRTLVTALADGRRVRVDVVDD) form the KH domain.

This sequence belongs to the KhpA RNA-binding protein family.

It localises to the cytoplasm. A probable RNA-binding protein. The protein is RNA-binding protein KhpA of Leifsonia xyli subsp. xyli (strain CTCB07).